A 385-amino-acid polypeptide reads, in one-letter code: Prepilin peptidase EppA (385 aa).

The next 10 membrane-spanning stretches (helical) occupy residues 1 to 21 (MILM…CFYA), 29 to 49 (GIIP…LNGA), 58 to 78 (WIFI…YILW), 80 to 100 (MVAW…LLPF), 104 to 124 (LVSY…PFPL), 126 to 146 (VIIN…FFII), 166 to 186 (TSMV…LITD), 187 to 207 (FLPF…TMVI), 231 to 251 (FELT…IQLI), and 358 to 378 (PAIF…MILF).

This sequence belongs to the peptidase A24 family.

It localises to the cell membrane. Its function is as follows. Peptidase that processes the N-terminus of prepilins. The polypeptide is Prepilin peptidase EppA (Methanothermobacter thermautotrophicus (strain ATCC 29096 / DSM 1053 / JCM 10044 / NBRC 100330 / Delta H) (Methanobacterium thermoautotrophicum)).